Reading from the N-terminus, the 429-residue chain is Citrate synthase, chromosomal (429 aa).

Catalysis depends on residues histidine 306 and aspartate 364.

Belongs to the citrate synthase family.

The enzyme catalyses oxaloacetate + acetyl-CoA + H2O = citrate + CoA + H(+). It participates in carbohydrate metabolism; tricarboxylic acid cycle; isocitrate from oxaloacetate: step 1/2. This Rhizobium tropici protein is Citrate synthase, chromosomal (ccsA).